Consider the following 381-residue polypeptide: Actin-binding Rho-activating protein (381 aa).

Disordered regions lie at residues 39 to 156 (ENSI…SHGS) and 179 to 207 (QEEP…PEQD). Over residues 69-79 (PTSHQKAQSAP) the composition is skewed to polar residues. Basic and acidic residues predominate over residues 97–110 (KAPEVSHIKKKEVS). Residues S156 and S188 each carry the phosphoserine modification. Basic and acidic residues predominate over residues 179–188 (QEEPTWRSDS). 2 actin-binding regions span residues 199-299 (EAEE…AERA) and 300-381 (KRAE…TLLK). Interaction with actin regions lie at residues 240–285 (SPVG…GDEG) and 352–381 (MRAR…TLLK).

As to quaternary structure, binds F-actin and ABLIM1, ABLIM2 and ABLIM3. Interaction with ABLIM2 and ABLIM3 enhances activity.

Its subcellular location is the cytoplasm. The protein resides in the myofibril. It is found in the sarcomere. It localises to the cytoskeleton. Functionally, acts as an activator of serum response factor (SRF)-dependent transcription possibly by inducing nuclear translocation of MKL1 or MKL2 and through a mechanism requiring Rho-actin signaling. The chain is Actin-binding Rho-activating protein from Homo sapiens (Human).